We begin with the raw amino-acid sequence, 465 residues long: UDP-N-acetylmuramate--L-alanine ligase (465 aa).

115–121 is an ATP binding site; the sequence is GAHGKTT.

This sequence belongs to the MurCDEF family.

The protein localises to the cytoplasm. It carries out the reaction UDP-N-acetyl-alpha-D-muramate + L-alanine + ATP = UDP-N-acetyl-alpha-D-muramoyl-L-alanine + ADP + phosphate + H(+). Its pathway is cell wall biogenesis; peptidoglycan biosynthesis. Functionally, cell wall formation. The protein is UDP-N-acetylmuramate--L-alanine ligase of Coxiella burnetii (strain CbuG_Q212) (Coxiella burnetii (strain Q212)).